The sequence spans 356 residues: Serine/arginine-rich splicing factor RS41 (356 aa).

RRM domains lie at 2-74 (KPVF…WTKN) and 96-167 (KTLF…YAVK). Positions 73–92 (KNDRGGAGRSGGSRRSSSGL) are disordered. Over residues 168–186 (DDDSRGNGYSPERRRDRSP) the composition is skewed to basic and acidic residues. Positions 168 to 356 (DDDSRGNGYS…SPSRSPPAEE (189 aa)) are disordered. 6 positions are modified to phosphoserine: S192, S194, S210, S239, S254, and S274. Residues 238–253 (LSPDYKRDDRRRERVA) are compositionally biased toward basic and acidic residues. 3 tandem repeats follow at residues 267–278 (KGRGESRSPPPY), 279–290 (EKRRESRSPPPY), and 291–302 (EKRRESRSPPPY). The 4 X 12 AA tandem repeats of [KE]-[GK]-R -[GR]-E-S-R-S-P-P-P-Y stretch occupies residues 267–307 (KGRGESRSPPPYEKRRESRSPPPYEKRRESRSPPPYEKRRE). A compositionally biased stretch (basic and acidic residues) spans 268–306 (GRGESRSPPPYEKRRESRSPPPYEKRRESRSPPPYEKRR). A 4; truncated repeat occupies 303–307 (EKRRE). 5 positions are modified to phosphoserine: S309, S324, S342, S347, and S351.

This sequence belongs to the splicing factor SR family. RS subfamily. As to quaternary structure, component of the spliceosome. Interacts with RCF3 and CPL1. Interacts with DRB1/HYL1 and SE. In terms of tissue distribution, leaves, stem, roots and flowers.

Its subcellular location is the nucleus. It is found in the nucleus speckle. Functionally, required for constitutive and alternative pre-mRNA splicing. Involved in primary miRNA processing and pri-miRNA biogenesis. Binds both intronless and intron-containing pri-miRNAs. The protein is Serine/arginine-rich splicing factor RS41 (RS41) of Arabidopsis thaliana (Mouse-ear cress).